The primary structure comprises 495 residues: Trimethylamine methyltransferase MttB1 (495 aa).

Pyrrolysine 334 is a non-standard amino acid (pyrrolysine).

Belongs to the trimethylamine methyltransferase family. In terms of assembly, can form a complex with MttC.

It carries out the reaction Co(I)-[trimethylamine-specific corrinoid protein] + trimethylamine + H(+) = methyl-Co(III)-[trimethylamine-specific corrinoid protein] + dimethylamine. Its pathway is one-carbon metabolism; methanogenesis from trimethylamine. In terms of biological role, catalyzes the transfer of a methyl group from trimethylamine to the corrinoid cofactor of MttC. The protein is Trimethylamine methyltransferase MttB1 (mttB1) of Methanosarcina mazei (strain ATCC BAA-159 / DSM 3647 / Goe1 / Go1 / JCM 11833 / OCM 88) (Methanosarcina frisia).